Here is a 92-residue protein sequence, read N- to C-terminus: Large ribosomal subunit protein bL31 (92 aa).

The disordered stretch occupies residues 66 to 92; the sequence is GMGSANPDVDAPAPKKAAKKSDAESDS. The segment covering 70–80 has biased composition (low complexity); it reads ANPDVDAPAPK.

It belongs to the bacterial ribosomal protein bL31 family. Type A subfamily. As to quaternary structure, part of the 50S ribosomal subunit.

Its function is as follows. Binds the 23S rRNA. The polypeptide is Large ribosomal subunit protein bL31 (Synechococcus sp. (strain RCC307)).